The chain runs to 206 residues: Transmembrane emp24 domain-containing protein bai (206 aa).

A signal peptide spans 1–20 (MMKAILATLAIFGCIWPGQS). Over 21 to 172 (VMFHLTPNTQ…RDTNEKTNSR (152 aa)) the chain is Lumenal. Positions 30 to 140 (QKCLKEDIQA…LKPLEVDLKR (111 aa)) constitute a GOLD domain. The helical transmembrane segment at 173-193 (VLFFSIFSMCCLLGLATWQVL) threads the bilayer. Over 194–206 (YLRRYFKAKKLIE) the chain is Cytoplasmic.

Belongs to the EMP24/GP25L family.

The protein localises to the membrane. Its function is as follows. Eca and bai are essential, though not redundant, for dorsoventral patterning of the embryo. Specifically required during early embryogenesis for the activity of maternal tkv, while the zygotic tkv is not affected. This Drosophila willistoni (Fruit fly) protein is Transmembrane emp24 domain-containing protein bai.